The following is a 944-amino-acid chain: Ras guanine nucleotide exchange factor O (944 aa).

An RING-type zinc finger spans residues 16-54 (CGICQNLFKDPNTLIPCGHAFCLDCLTTNASIKNCIQCK). Residues 80-102 (NNSNNNSNGENTNNNNNIINNER) form a disordered region. The segment at 152 to 192 (NNIRYCMEHYEHYYAFCNDCQAPVCPSCLLTTHNRHGMIPL) adopts a B box-type zinc-finger fold. Zn(2+) is bound by residues C157, H160, C179, and H184. Coiled-coil stretches lie at residues 200 to 234 (KMKE…LLDS) and 271 to 303 (ASHM…KFKD). One can recognise an N-terminal Ras-GEF domain in the interval 402–528 (EEFEVKYGSL…LLLNSNENSP (127 aa)). Disordered regions lie at residues 530-562 (ITSS…LQPT), 587-623 (TNNG…SSPS), and 644-670 (ESPL…FGAS). Positions 590–604 (GTCKIQNSPPKNYQQ) are enriched in polar residues. 2 stretches are compositionally biased toward low complexity: residues 605-623 (SNYS…SSPS) and 648-670 (NSPR…FGAS). In terms of domain architecture, Ras-GEF spans 727-944 (DEFEIAKQLT…EYLNVHIDEL (218 aa)).

Functionally, promotes the exchange of Ras-bound GDP by GTP. This is Ras guanine nucleotide exchange factor O (gefO) from Dictyostelium discoideum (Social amoeba).